We begin with the raw amino-acid sequence, 614 residues long: FAD-linked oxidoreductase ffsJ (614 aa).

An N-terminal signal peptide occupies residues 1–19 (MRLTRALTPAILALPAAHA). N-linked (GlcNAc...) asparagine glycosylation is found at Asn-30, Asn-53, Asn-72, and Asn-114. An FAD-binding PCMH-type domain is found at 119-301 (TGSLPAYYID…LSSTHRVEPE (183 aa)). N-linked (GlcNAc...) asparagine glycosylation is found at Asn-314, Asn-329, Asn-461, Asn-465, Asn-478, and Asn-514. Positions 453–495 (NGHGRSNNNNSNNSSTSTSTSTSSKNGSVKPYAYGGKETTSST) are disordered. Residues 456 to 480 (GRSNNNNSNNSSTSTSTSTSSKNGS) are compositionally biased toward low complexity.

This sequence belongs to the oxygen-dependent FAD-linked oxidoreductase family. FAD is required as a cofactor.

It participates in mycotoxin biosynthesis. Functionally, FAD-linked oxidoreductase; part of the gene cluster that mediates the biosynthesis of the cytotoxic leucine-containing cytochalasans, including aspochalasin C, aspochalasin E, TMC-169, flavichalasine F, aspergillin PZ, aspochalasin M and flavichalasine G. The first step in the pathway is catalyzed by the hybrid PKS-NRPS ffsA that utilizes 8 units of malonyl-CoA to iteratively assemble the octaketide chain before addition of L-leucine by the C-terminal NRPS modules. Because ffsA lacks a designated enoylreductase (ER) domain, the required activity is provided the enoyl reductase fssC. The methyltransferase (MT) domain of ffsA catalyzes the alpha-methylation at C10 and C14 using S-adenosyl-L-methionine as the methyl-donating cosubstrate. Reduction by the hydrolyase ffsE, followed by dehydration and intra-molecular Diels-Alder cyclization by the Diels-Alderase ffsF then yield the required isoindolone-fused macrocycle. A number of oxidative steps catalyzed by the tailoring cytochrome P450 monooxygenase ffsD, the FAD-linked oxidoreductase ffsJ and the short-chain dehydrogenase/reductase ffsI, are further required to afford the final products. This is FAD-linked oxidoreductase ffsJ from Aspergillus flavipes.